A 421-amino-acid chain; its full sequence is ASMFKHDHYMDNGVRYPNGDGICEQLNETKCDAGFSYDRSICEGPHYWHTISKWFIACGIGQRQSPINIVSYDAKFRQRLPKLKFKPHMEKLKTEVTNHQNRAPEFEPEDGENLYVKLNNLVDGHYKFHNLHVHNGRTRRKGSEHSVNGRFTPMEAHLVFHHDDQTHFEPTRTKLGGAFPGHNDFVVVGVFHEVGDDGFGDEPDDEECKRILKGHHPDNNENGNGDNGNNGYNGDNGNNGDNGNNGYNGDNGNNGDNGNNGYNGDNGNNGDNGNNGENGNNGENGNNGDNGNNGENGHKHGCRVKKAKHLSRILECAYRNDKVREFKKVGEEEGLDVHLTPEMALPPLKYRHYYTYEGSLTTPPCTESVLWVVQKCHVQVSRRVLHALRNVEGYKDGTTLRKYGTRRPTQKNKVTVYKSFK.

N-linked (GlcNAc...) asparagine glycosylation occurs at N27. The Alpha-carbonic anhydrase domain maps to 33–420 (AGFSYDRSIC…KNKVTVYKSF (388 aa)). Residues H132, H134, and H157 each contribute to the Zn(2+) site. Positions 197–206 (DGFGDEPDDE) are enriched in acidic residues. A disordered region spans residues 197–303 (DGFGDEPDDE…GENGHKHGCR (107 aa)). Basic and acidic residues predominate over residues 207–219 (ECKRILKGHHPDN). The span at 220 to 295 (NENGNGDNGN…NNGDNGNNGE (76 aa)) shows a compositional bias: low complexity. 24 repeat units span residues 225 to 227 (GDN), 228 to 230 (GNN), 231 to 233 (GYN), 234 to 236 (GDN), 237 to 239 (GNN), 240 to 242 (GDN), 243 to 245 (GNN), 246 to 248 (GYN), 249 to 251 (GDN), 252 to 254 (GNN), 255 to 257 (GDN), 258 to 260 (GNN), 261 to 263 (GYN), 264 to 266 (GDN), 267 to 269 (GNN), 270 to 272 (GDN), 273 to 275 (GNN), 276 to 278 (GEN), 279 to 281 (GNN), 282 to 284 (GEN), 285 to 287 (GNN), 288 to 290 (GDN), 291 to 292 (GN), and 294 to 296 (GEN). A 24 X 3 AA approximate tandem repeats of G-X-N region spans residues 225–296 (GDNGNNGYNG…NGDNGNNGEN (72 aa)). 361-362 (TT) lines the substrate pocket.

Belongs to the alpha-carbonic anhydrase family. As to quaternary structure, homooligomer; disulfide-linked. May also be disulfide-linked to insoluble organic matrix. Zn(2+) is required as a cofactor. In terms of tissue distribution, expressed in the mantle.

It is found in the secreted. The protein localises to the extracellular space. The protein resides in the extracellular matrix. The enzyme catalyses hydrogencarbonate + H(+) = CO2 + H2O. Functionally, acts as a negative regulator for calcification in the shells of mollusks. May function both as a calcium concentrator and as a carbonic anhydrase required for production of carbonate ions, which are assembled to CaCO(3) at mineralization sites. Is important for shell formation in both the calcitic prismatic layer and the aragonitic nacreous layerr. Shows inhibitory activity of crystal formation when present in free state but, when attached to the insoluble matrix, may regulate the form and size of aragonite crystal. This is Nacrein-like protein M from Pinctada maxima (Silver-lipped pearl oyster).